Here is a 317-residue protein sequence, read N- to C-terminus: NADH-ubiquinone oxidoreductase chain 1 (317 aa).

The next 9 helical transmembrane spans lie at 3–23, 37–57, 69–89, 103–123, 141–161, 173–193, 207–227, 247–267, and 282–302; these read YIEL…LTVA, PNAV…KLLL, LILF…WSVI, GFIL…LAGW, LISY…IGGT, AIWY…GCVA, SELV…LFFL, GGTG…YIWV, and LCWM…PAYL.

This sequence belongs to the complex I subunit 1 family.

The protein resides in the mitochondrion inner membrane. It carries out the reaction a ubiquinone + NADH + 5 H(+)(in) = a ubiquinol + NAD(+) + 4 H(+)(out). In terms of biological role, core subunit of the mitochondrial membrane respiratory chain NADH dehydrogenase (Complex I) that is believed to belong to the minimal assembly required for catalysis. Complex I functions in the transfer of electrons from NADH to the respiratory chain. The immediate electron acceptor for the enzyme is believed to be ubiquinone. This is NADH-ubiquinone oxidoreductase chain 1 (NAD1) from Candida albicans (strain SC5314 / ATCC MYA-2876) (Yeast).